A 547-amino-acid chain; its full sequence is Membrane protein insertase YidC (547 aa).

6 helical membrane-spanning segments follow: residues Leu-6–Tyr-26, Val-328–Ile-348, Leu-351–Phe-371, Leu-425–Val-445, Leu-459–Gln-479, and Pro-499–Val-519.

The protein belongs to the OXA1/ALB3/YidC family. Type 1 subfamily. As to quaternary structure, interacts with the Sec translocase complex via SecD. Specifically interacts with transmembrane segments of nascent integral membrane proteins during membrane integration.

Its subcellular location is the cell inner membrane. Required for the insertion and/or proper folding and/or complex formation of integral membrane proteins into the membrane. Involved in integration of membrane proteins that insert both dependently and independently of the Sec translocase complex, as well as at least some lipoproteins. Aids folding of multispanning membrane proteins. This chain is Membrane protein insertase YidC, found in Dechloromonas aromatica (strain RCB).